The primary structure comprises 298 residues: 4-diphosphocytidyl-2-C-methyl-D-erythritol kinase (298 aa).

K19 is an active-site residue. Residue 106–116 (PVASGIGGGSA) coordinates ATP. D148 is a catalytic residue.

The protein belongs to the GHMP kinase family. IspE subfamily.

It carries out the reaction 4-CDP-2-C-methyl-D-erythritol + ATP = 4-CDP-2-C-methyl-D-erythritol 2-phosphate + ADP + H(+). It participates in isoprenoid biosynthesis; isopentenyl diphosphate biosynthesis via DXP pathway; isopentenyl diphosphate from 1-deoxy-D-xylulose 5-phosphate: step 3/6. Its function is as follows. Catalyzes the phosphorylation of the position 2 hydroxy group of 4-diphosphocytidyl-2C-methyl-D-erythritol. The sequence is that of 4-diphosphocytidyl-2-C-methyl-D-erythritol kinase from Rhizobium leguminosarum bv. trifolii (strain WSM2304).